Here is a 148-residue protein sequence, read N- to C-terminus: Large ribosomal subunit protein bL9 (148 aa).

Belongs to the bacterial ribosomal protein bL9 family.

In terms of biological role, binds to the 23S rRNA. The protein is Large ribosomal subunit protein bL9 of Agathobacter rectalis (strain ATCC 33656 / DSM 3377 / JCM 17463 / KCTC 5835 / VPI 0990) (Eubacterium rectale).